Here is a 335-residue protein sequence, read N- to C-terminus: Pro-cathepsin H (335 aa).

The signal sequence occupies residues 1 to 22; that stretch reads MWAVLSLLCAGAWLLGPPACGA. A propeptide spanning residues 23–97 is cleaved from the precursor; that stretch reads SNLAVSSFEK…DEIRHKYLWS (75 aa). Asn72 and Asn101 each carry an N-linked (GlcNAc...) asparagine glycan. Intrachain disulfides connect Cys102/Cys327, Cys138/Cys181, Cys172/Cys214, and Cys272/Cys322. The propeptide occupies 107 to 115; that stretch reads GNYLRGTGP. Cys141 is a catalytic residue. Asn230 carries N-linked (GlcNAc...) asparagine glycosylation. Residues His281 and Asn301 contribute to the active site.

It belongs to the peptidase C1 family. Composed of cathepsin H and mini chain; disulfide-linked. Cathepsin H may be split into heavy and light chain. All chains are held together by disulfide bonds.

It is found in the lysosome. It catalyses the reaction Hydrolysis of proteins, acting as an aminopeptidase (notably, cleaving Arg-|-Xaa bonds) as well as an endopeptidase.. Its function is as follows. Important for the overall degradation of proteins in lysosomes. This chain is Pro-cathepsin H (CTSH), found in Sus scrofa (Pig).